Reading from the N-terminus, the 136-residue chain is Histone H3.3C-like (136 aa).

Residue Arg3 is modified to Asymmetric dimethylarginine; by PRMT6; alternate. Position 3 is a citrulline; alternate (Arg3). Residue Thr4 is modified to Phosphothreonine; by HASPIN. Allysine; alternate is present on Lys5. Lys5 bears the N6,N6,N6-trimethyllysine; alternate mark. Lys5 carries the post-translational modification N6,N6-dimethyllysine; alternate. Lys5 bears the N6-(2-hydroxyisobutyryl)lysine; alternate mark. Lys5 carries the post-translational modification N6-(beta-hydroxybutyryl)lysine; alternate. At Lys5 the chain carries N6-acetyllysine; alternate. The residue at position 5 (Lys5) is an N6-methyllysine; alternate. Thr7 is subject to Phosphothreonine; by PKC. Lys10 carries the post-translational modification N6,N6,N6-trimethyllysine; alternate. An N6,N6-dimethyllysine; alternate modification is found at Lys10. The residue at position 10 (Lys10) is an N6-(2-hydroxyisobutyryl)lysine; alternate. N6-acetyllysine; alternate is present on Lys10. At Lys10 the chain carries N6-methyllysine; alternate. At Ser11 the chain carries ADP-ribosylserine; alternate. Ser11 is modified (phosphoserine; alternate; by AURKB, AURKC, RPS6KA3, RPS6KA4 and RPS6KA5). Thr12 carries the post-translational modification Phosphothreonine; by PKC. Lys15 is modified (N6-(2-hydroxyisobutyryl)lysine; alternate). N6-(beta-hydroxybutyryl)lysine; alternate is present on Lys15. Lys15 carries the N6-acetyllysine; alternate modification. Lys15 bears the N6-glutaryllysine; alternate mark. Lys15 is subject to N6-succinyllysine; alternate. Residue Arg18 is modified to Citrulline; alternate. Residue Arg18 is modified to Asymmetric dimethylarginine; by CARM1; alternate. Lys19 and Lys28 each carry N6-(2-hydroxyisobutyryl)lysine; alternate. Lys19 is modified (N6-(beta-hydroxybutyryl)lysine; alternate). 2 positions are modified to N6-acetyllysine; alternate: Lys19 and Lys28. Lys19 and Lys28 each carry N6-methyllysine; alternate. An N6-glutaryllysine; alternate mark is found at Lys19 and Lys28. At Lys19 the chain carries N6-butyryllysine; alternate. Lys28 is modified (N6,N6,N6-trimethyllysine; alternate). Residue Lys28 is modified to N6,N6-dimethyllysine; alternate. Ser29 carries the post-translational modification ADP-ribosylserine; alternate. Position 29 is a phosphoserine; alternate; by AURKB, AURKC and RPS6KA5 (Ser29). Ser32 bears the Phosphoserine mark. The residue at position 38 (Lys38) is an N6-methyllysine. At Tyr42 the chain carries Phosphotyrosine. Lys57 bears the N6,N6,N6-trimethyllysine; alternate mark. Residue Lys57 is modified to N6-(2-hydroxyisobutyryl)lysine; alternate. N6-(beta-hydroxybutyryl)lysine; alternate is present on Lys57. Lys57 is subject to N6-acetyllysine; alternate. Lys57 carries the post-translational modification N6-glutaryllysine; alternate. Lys57 carries the post-translational modification N6-succinyllysine; alternate. The residue at position 57 (Lys57) is an N6-methyllysine; by EHMT2; alternate. At Ser58 the chain carries Phosphoserine. An N6-(2-hydroxyisobutyryl)lysine; alternate mark is found at Lys65 and Lys80. N6-methyllysine; alternate is present on residues Lys65 and Lys80. At Lys80 the chain carries N6,N6,N6-trimethyllysine; alternate. Position 80 is an N6,N6-dimethyllysine; alternate (Lys80). Lys80 carries the N6-acetyllysine; alternate modification. An N6-glutaryllysine; alternate modification is found at Lys80. N6-succinyllysine; alternate is present on Lys80. At Thr81 the chain carries Phosphothreonine. A Phosphoserine modification is found at Ser87.

This sequence belongs to the histone H3 family. As to quaternary structure, the nucleosome is a histone octamer containing two molecules each of H2A, H2B, H3 and H4 assembled in one H3-H4 heterotetramer and two H2A-H2B heterodimers. The octamer wraps approximately 147 bp of DNA. Acetylation is generally linked to gene activation. Acetylation on Lys-19 favors methylation at Arg-18. Post-translationally, citrullination at Arg-18 by PADI4 impairs methylation and represses transcription. In terms of processing, asymmetric dimethylation at Arg-18 (H3R17me2a) by CARM1 is linked to gene activation. Asymmetric dimethylation at Arg-3 (H3R2me2a) by PRMT6 is linked to gene repression and is mutually exclusive with H3 Lys-5 methylation (H3K4me2 and H3K4me3). H3R2me2a is present at the 3' of genes regardless of their transcription state and is enriched on inactive promoters, while it is absent on active promoters. Methylation at Lys-5 (H3K4me) and Lys-80 (H3K79me) are linked to gene activation. Methylation at Lys-5 (H3K4me) facilitates subsequent acetylation of H3 and H4. Methylation at Lys-80 (H3K79me) is associated with DNA double-strand break (DSB) responses and is a specific target for TP53BP1. Methylation at Lys-10 (H3K9me) and Lys-28 (H3K27me) are linked to gene repression. Methylation at Lys-10 (H3K9me) is a specific target for HP1 proteins (CBX1, CBX3 and CBX5) and prevents subsequent phosphorylation at Ser-11 (H3S10ph) and acetylation of H3 and H4. Methylation at Lys-5 (H3K4me) and Lys-80 (H3K79me) require preliminary monoubiquitination of H2B at 'Lys-120'. Methylation at Lys-10 (H3K9me) and Lys-28 (H3K27me) are enriched in inactive X chromosome chromatin. Monomethylation at Lys-57 (H3K56me1) by EHMT2/G9A in G1 phase promotes interaction with PCNA and is required for DNA replication. Post-translationally, phosphorylated at Thr-4 (H3T3ph) by HASPIN during prophase and dephosphorylated during anaphase. Phosphorylation at Ser-11 (H3S10ph) by AURKB is crucial for chromosome condensation and cell-cycle progression during mitosis and meiosis. In addition phosphorylation at Ser-11 (H3S10ph) by RPS6KA4 and RPS6KA5 is important during interphase because it enables the transcription of genes following external stimulation, like mitogens, stress, growth factors or UV irradiation and result in the activation of genes, such as c-fos and c-jun. Phosphorylation at Ser-11 (H3S10ph), which is linked to gene activation, prevents methylation at Lys-10 (H3K9me) but facilitates acetylation of H3 and H4. Phosphorylation at Ser-11 (H3S10ph) by AURKB mediates the dissociation of HP1 proteins (CBX1, CBX3 and CBX5) from heterochromatin. Phosphorylation at Ser-11 (H3S10ph) is also an essential regulatory mechanism for neoplastic cell transformation. Phosphorylated at Ser-29 (H3S28ph) by MAP3K20 isoform 1, RPS6KA5 or AURKB during mitosis or upon ultraviolet B irradiation. Phosphorylation at Thr-7 (H3T6ph) by PRKCB is a specific tag for epigenetic transcriptional activation that prevents demethylation of Lys-5 (H3K4me) by LSD1/KDM1A. At centromeres, specifically phosphorylated at Thr-12 (H3T11ph) from prophase to early anaphase, by DAPK3 and PKN1. Phosphorylation at Thr-12 (H3T11ph) by PKN1 or isoform M2 of PKM (PKM2) is a specific tag for epigenetic transcriptional activation that promotes demethylation of Lys-10 (H3K9me) by KDM4C/JMJD2C. Phosphorylation at Tyr-42 (H3Y41ph) by JAK2 promotes exclusion of CBX5 (HP1 alpha) from chromatin. In terms of processing, lysine deamination at Lys-5 (H3K4all) to form allysine is mediated by LOXL2. Allysine formation by LOXL2 only takes place on H3K4me3 and results in gene repression. Butyrylation of histones marks active promoters and competes with histone acetylation. It is present during late spermatogenesis. Post-translationally, succinylation at Lys-80 (H3K79succ) by KAT2A takes place with a maximum frequency around the transcription start sites of genes. It gives a specific tag for epigenetic transcription activation. In terms of processing, serine ADP-ribosylation constitutes the primary form of ADP-ribosylation of proteins in response to DNA damage. Serine ADP-ribosylation at Ser-11 (H3S10ADPr) is mutually exclusive with phosphorylation at Ser-11 (H3S10ph) and impairs acetylation at Lys-10 (H3K9ac).

The protein resides in the nucleus. It localises to the chromosome. Functionally, core component of nucleosome. Nucleosomes wrap and compact DNA into chromatin, limiting DNA accessibility to the cellular machineries which require DNA as a template. Histones thereby play a central role in transcription regulation, DNA repair, DNA replication and chromosomal stability. DNA accessibility is regulated via a complex set of post-translational modifications of histones, also called histone code, and nucleosome remodeling. The polypeptide is Histone H3.3C-like (Bos taurus (Bovine)).